The primary structure comprises 259 residues: Cell division protein DivIB (259 aa).

The Cytoplasmic segment spans residues 1-27 (MADGKVIDIEQKVPDFREQRRRKSRRR). A helical transmembrane segment spans residues 28-45 (LVLYISILAFFLLFVYYF). The Extracellular segment spans residues 46–259 (QSDYSTVGHV…QEEEEIEIEE (214 aa)). Residues 50-118 (STVGHVDVYG…RSITLYVDEY (69 aa)) enclose the POTRA domain.

It belongs to the FtsQ/DivIB family. DivIB subfamily.

Its subcellular location is the cell membrane. Its function is as follows. Cell division protein that may be involved in stabilizing or promoting the assembly of the division complex. The sequence is that of Cell division protein DivIB from Bacillus selenitireducens (strain ATCC 700615 / DSM 15326 / MLS10).